Here is a 112-residue protein sequence, read N- to C-terminus: Putative pterin-4-alpha-carbinolamine dehydratase (112 aa).

It belongs to the pterin-4-alpha-carbinolamine dehydratase family.

It carries out the reaction (4aS,6R)-4a-hydroxy-L-erythro-5,6,7,8-tetrahydrobiopterin = (6R)-L-erythro-6,7-dihydrobiopterin + H2O. This Shewanella baltica (strain OS223) protein is Putative pterin-4-alpha-carbinolamine dehydratase.